Consider the following 257-residue polypeptide: Phycoerythrobilin:ferredoxin oxidoreductase (257 aa).

This sequence belongs to the HY2 family.

The enzyme catalyses (3Z)-phycoerythrobilin + oxidized 2[4Fe-4S]-[ferredoxin] = 15,16-dihydrobiliverdin + reduced 2[4Fe-4S]-[ferredoxin] + 2 H(+). Functionally, catalyzes the two-electron reduction of the C2 and C3(1) diene system of 15,16-dihydrobiliverdin. The chain is Phycoerythrobilin:ferredoxin oxidoreductase from Prochlorococcus marinus (strain MIT 9211).